The chain runs to 855 residues: Cell surface glycoprotein (855 aa).

The N-terminal stretch at methionine 1–alanine 22 is a signal peptide. N-linked (GlcNAc...) asparagine glycosylation is found at asparagine 78, asparagine 83, asparagine 108, asparagine 167, asparagine 174, asparagine 187, asparagine 203, asparagine 227, asparagine 230, asparagine 313, asparagine 363, asparagine 441, asparagine 548, asparagine 588, asparagine 608, asparagine 620, asparagine 642, asparagine 656, and asparagine 754. The segment covering glutamate 782–glutamate 802 has biased composition (low complexity). The segment at glutamate 782–threonine 831 is disordered. Over residues glutamate 817–threonine 827 the composition is skewed to acidic residues. The chain crosses the membrane as a helical span at residues threonine 831–valine 851. The PGF sorting signal signature appears at proline 832–phenylalanine 834.

This sequence belongs to the halobacterial S-layer protein family. Post-translationally, glycosylated. In terms of processing, cleaved by the archaeosortase ArtA at the C-terminus, with removal of a short hydrophobic segment. Lipidation.

The protein localises to the secreted. Its subcellular location is the cell wall. The protein resides in the S-layer. It is found in the cell membrane. In terms of biological role, S-layer protein. The S-layer is a paracrystalline mono-layered assembly of proteins which coats the surface of the cell. In Haloferax gibbonsii, this protein is Cell surface glycoprotein.